The following is a 441-amino-acid chain: Membrane-bound protease PH1510 (441 aa).

A signal peptide spans 1-20; sequence MRRILLSMIVLIFLASPILA. 64 to 67 provides a ligand contact to substrate; it reads GGRA. Ser-97 (nucleophile) is an active-site residue. 119 to 124 lines the substrate pocket; sequence ACRPIL. Lys-138 functions as the Proton donor/acceptor in the catalytic mechanism. 4 helical membrane-spanning segments follow: residues 239-259, 271-291, 307-327, and 344-364; these read VAYL…LTPG, IILA…ILLI, FGLF…LLFG, and ILII…MAAV.

The protein belongs to the peptidase S14 family. In terms of assembly, homodimer.

It is found in the membrane. Its activity is regulated as follows. Inhibited by divalent metal cations, including Mg(2+), Mn(2+), Ca(2+) and Zn(2+). Mildly inhibited by 0.01 % SDS and 0.1% dodecyl-beta-D-maltoside. Activity is nearly abolished by 1 % SDS. Functionally, protease that cleaves its substrates preferentially near hydrophobic or aromatic amino acid residues. Can degrade casein and the stomatin homolog PH1511 (in vitro). The sequence is that of Membrane-bound protease PH1510 from Pyrococcus horikoshii (strain ATCC 700860 / DSM 12428 / JCM 9974 / NBRC 100139 / OT-3).